Consider the following 292-residue polypeptide: tRNA dimethylallyltransferase (292 aa).

5-12 (APTGAGKT) serves as a coordination point for ATP. Residue 7–12 (TGAGKT) participates in substrate binding. Positions 29-32 (DSRQ) are interaction with substrate tRNA.

The protein belongs to the IPP transferase family. In terms of assembly, monomer. Mg(2+) is required as a cofactor.

The catalysed reaction is adenosine(37) in tRNA + dimethylallyl diphosphate = N(6)-dimethylallyladenosine(37) in tRNA + diphosphate. In terms of biological role, catalyzes the transfer of a dimethylallyl group onto the adenine at position 37 in tRNAs that read codons beginning with uridine, leading to the formation of N6-(dimethylallyl)adenosine (i(6)A). The polypeptide is tRNA dimethylallyltransferase (Leptospira borgpetersenii serovar Hardjo-bovis (strain JB197)).